Here is a 378-residue protein sequence, read N- to C-terminus: Alpha-(1,3)-fucosyltransferase fut-5 (378 aa).

Residues 1–7 lie on the Cytoplasmic side of the membrane; it reads MKHNTLR. The helical; Signal-anchor for type II membrane protein transmembrane segment at 8–28 threads the bilayer; the sequence is AVFQFSFFIGICTFIMIAGYS. Over 29 to 378 the chain is Lumenal; sequence YQINYNQRMG…CDNSFATRFL (350 aa). N-linked (GlcNAc...) asparagine glycans are attached at residues N44, N88, N105, N143, N171, and N307.

It belongs to the glycosyltransferase 10 family. Requires Ca(2+) as cofactor. In terms of processing, N-glycosylated.

Its subcellular location is the golgi apparatus. It localises to the golgi stack membrane. It carries out the reaction a beta-D-galactosyl-(1-&gt;3)-N-acetyl-beta-D-glucosaminyl derivative + GDP-beta-L-fucose = a beta-D-galactosyl-(1-&gt;3)-[alpha-L-fucosyl-(1-&gt;4)]-N-acetyl-beta-D-glucosaminyl derivative + GDP + H(+). It functions in the pathway protein modification; protein glycosylation. Inhibited by Cu(2+) and Ni(2+), and to a lesser extent by EDTA, Mn(2+) and Mg(2+). Catalyzes the addition of fucose in alpha 1-3 linkage to GalNAc-beta-1-&gt;4-GlcNAc-beta-1-&gt;3-Gal-beta-1-&gt;4-Glc (LDNT)acceptor. Unlike fut-1, does not add fucose to Man-alpha-1-&gt;3-(Man-alpha-1-&gt;6)-Man-beta-1-&gt;4-GlcNAc-beta-1-&gt;4-GlcNAc-beta-1-Asn (M3), Man-alpha-1-&gt;3-(Man-alpha-1-&gt;6)-Man-beta-1-&gt;4-GlcNAc-beta-1-&gt;4-(Fuc-alpha-1-&gt;6)-GlcNAc-beta-1-Asn (M3F6) or GlcNAc-beta-1-&gt;2-Man-alpha-1-&gt;3-(GlcNAc-beta-1-&gt;2-Man-alpha-1-&gt;6)-Man-beta-1-4-GlcNAc-beta-1-&gt;4-(Fuc-alpha-1-&gt;6)-GlcNAc-beta-1-Asn (GnM3F6) acceptors. This is Alpha-(1,3)-fucosyltransferase fut-5 from Caenorhabditis elegans.